Reading from the N-terminus, the 143-residue chain is Large-conductance mechanosensitive channel (143 aa).

Helical transmembrane passes span 10 to 30 (FAVKGNVMDLAVGVIIGGAFS) and 89 to 109 (GSFITVAINFVILAFIIFLMV).

Belongs to the MscL family. In terms of assembly, homopentamer.

Its subcellular location is the cell inner membrane. Functionally, channel that opens in response to stretch forces in the membrane lipid bilayer. May participate in the regulation of osmotic pressure changes within the cell. This Burkholderia vietnamiensis (strain G4 / LMG 22486) (Burkholderia cepacia (strain R1808)) protein is Large-conductance mechanosensitive channel.